We begin with the raw amino-acid sequence, 345 residues long: uncharacterized protein (345 aa).

This is an uncharacterized protein from Saccharomyces cerevisiae (strain ATCC 204508 / S288c) (Baker's yeast).